The following is a 179-amino-acid chain: Lebocin-1/2 (179 aa).

Positions 1 to 16 are cleaved as a signal peptide; it reads MYKFLVFSSVLVLFFA. Positions 17-120 are excised as a propeptide; the sequence is QASCQRFIQP…QPIESHRNTR (104 aa). The disordered stretch occupies residues 93 to 116; sequence NNEASIEHSHHTVDTGLDQPIESH. The O-linked (GalNAc...) threonine glycan is linked to threonine 135. The propeptide occupies 153 to 179; it reads RRHASDDQEELRQYNEHFLIPRDIFQE.

Belongs to the lebocin family. O-glycosylation is important for the antibacterial activity of lebocin, O-linked glycan structure is a disaccharide (Gal-GalNAc) in case of lebocin 1 and a monosaccharide (GalNAc) in case of lebocin 2. In terms of tissue distribution, hemolymph. Produced in fat body.

It localises to the secreted. Its function is as follows. Antibacterial peptide. The chain is Lebocin-1/2 from Bombyx mori (Silk moth).